The sequence spans 949 residues: Coiled-coil domain-containing protein 80 (949 aa).

The first 22 residues, 1-22, serve as a signal peptide directing secretion; the sequence is MMWKMGPHFTTLLAMWLVCGSA. Disordered regions lie at residues 24–79, 112–132, and 289–610; these read HSPA…RRKS, SSAR…MLRF, and HVVQ…PKKS. Over residues 112 to 123 the composition is skewed to basic and acidic residues; it reads SSAREMVRDEGS. Positions 295 to 307 are enriched in gly residues; it reads NEGGGGAGGTGLG. Residues 308–328 show a composition bias toward basic and acidic residues; it reads GDKRKEDPRRTQVHPTREAPR. Over residues 345-380 the composition is skewed to low complexity; it reads RATTLPPAPVTTATRATSRVVTIAARPTTTTAYPAT. Basic and acidic residues predominate over residues 419 to 429; sequence PRKEQQREKPQ. The span at 436–445 shows a compositional bias: polar residues; sequence KATNYGSFTA. Residues 463–477 show a composition bias toward basic and acidic residues; it reads RFRDNRTDKREHGHQ. N-linked (GlcNAc...) asparagine glycosylation is present at Asn467. The segment covering 487–498 has biased composition (basic residues); the sequence is KPVKGKLPKKKD. Basic and acidic residues-rich tracts occupy residues 499–510, 534–548, and 556–581; these read RILSNEYEDKYD, KESK…PEKE, and AKQD…EKDK. Glycyl lysine isopeptide (Lys-Gly) (interchain with G-Cter in SUMO2) cross-links involve residues Lys544 and Lys547. Residues 554-587 are a coiled coil; the sequence is KSAKQDKLLKSEKQAKKAEKKTKQEKDKNKKKKA.

Belongs to the CCDC80 family. As to quaternary structure, binds to various extracellular matrix proteins. Phosphorylated. As to expression, expressed in brain, stomach, colon, rectum, liver, lung, kidney, adipocytes and testis.

It is found in the secreted. The protein localises to the extracellular space. The protein resides in the extracellular matrix. Its function is as follows. Promotes cell adhesion and matrix assembly. This Mus musculus (Mouse) protein is Coiled-coil domain-containing protein 80 (Ccdc80).